Here is a 562-residue protein sequence, read N- to C-terminus: Arf-GAP domain and FG repeat-containing protein 1 (562 aa).

In terms of domain architecture, Arf-GAP spans 11-135; sequence EKHLKMLRDM…WYVPPEQAKV (125 aa). The C4-type zinc finger occupies 29–52; it reads CFDCDQRGPTYVNMTVGSFVCTSC. A Phosphoserine modification is found at serine 167. The segment at 168–194 is disordered; it reads APALHLNKGTPSQSPVVGRSQAQQQEK. Polar residues predominate over residues 176-191; the sequence is GTPSQSPVVGRSQAQQ. The residue at position 177 (threonine 177) is a Phosphothreonine. 2 positions are modified to phosphoserine: serine 181 and serine 362. Residue serine 367 is glycosylated (O-linked (GlcNAc) serine).

In terms of assembly, interacts with EPS15R and EPS15. Interacts with FCHO1. In terms of processing, O-glycosylated.

The protein resides in the nucleus. It localises to the cytoplasmic vesicle. In terms of biological role, required for vesicle docking or fusion during acrosome biogenesis. May play a role in RNA trafficking or localization. This Bos taurus (Bovine) protein is Arf-GAP domain and FG repeat-containing protein 1 (AGFG1).